A 267-amino-acid polypeptide reads, in one-letter code: Hydroxyethylthiazole kinase (267 aa).

Position 46 (Met46) interacts with substrate. Residues Arg122 and Thr168 each coordinate ATP. Substrate is bound at residue Gly195.

This sequence belongs to the Thz kinase family. Mg(2+) serves as cofactor.

It carries out the reaction 5-(2-hydroxyethyl)-4-methylthiazole + ATP = 4-methyl-5-(2-phosphooxyethyl)-thiazole + ADP + H(+). Its pathway is cofactor biosynthesis; thiamine diphosphate biosynthesis; 4-methyl-5-(2-phosphoethyl)-thiazole from 5-(2-hydroxyethyl)-4-methylthiazole: step 1/1. Catalyzes the phosphorylation of the hydroxyl group of 4-methyl-5-beta-hydroxyethylthiazole (THZ). In Moorella thermoacetica (strain ATCC 39073 / JCM 9320), this protein is Hydroxyethylthiazole kinase.